Consider the following 339-residue polypeptide: Terpene synthase 9 (339 aa).

A DDxx(x)D/E motif motif is present at residues 79–84 (DDFLES). The NDxxSxxxD/E motif motif lies at 219–227 (NDCASYAKE).

Belongs to the terpene synthase family.

It catalyses the reaction (2E,6E)-farnesyl diphosphate = (-)-beta-barbatene + diphosphate. The enzyme catalyses (2E,6E)-farnesyl diphosphate = (E)-beta-farnesene + diphosphate. It carries out the reaction (2E)-geranyl diphosphate = (Z)-beta-ocimene + diphosphate. The catalysed reaction is (2E)-geranyl diphosphate + H2O = linalool + diphosphate. It catalyses the reaction (2E)-geranyl diphosphate = beta-myrcene + diphosphate. In terms of biological role, terpene synthase that converts its substrate farnesyl diphosphate (FPP) into the sesquiterpene beta-barbatene as a major product as well as (E)-beta-farnesene as a minor product. Is also able to convert geranyl diphosphate (GPP) into a mixture of monoterpenes including (Z)-beta-ocimene, linalool, beta-myrcene, limonene and alpha-terpineol. The protein is Terpene synthase 9 of Dictyostelium discoideum (Social amoeba).